The chain runs to 279 residues: MSGRVTARRRVVRLTPAGEIRRQDTLAVEEPLEIRIGGQSLTVTMRTPGSDIDLVHGFLLSENMIGAAEDVVSARYCAGTDEQGRNTYNVLDVELRRPVPVRTRHVLTTGACGLCGKTALDEVRAVTRFPLPAHGVTLAADVLADLPATLRAGQSVFQATGGLHAAGLFTVDGTPLAVREDIGRHNAVDKVIGWALRENRVPAHELVLIVSGRASFELVQKAVMAGIPILGAVSAPSSLAVDLAEEAGLTLVGFLRGETMNVYSGAHRLRSVSAGTRTA.

Cys112 serves as the catalytic Cysteine persulfide intermediate.

This sequence belongs to the FdhD family.

It is found in the cytoplasm. In terms of biological role, required for formate dehydrogenase (FDH) activity. Acts as a sulfur carrier protein that transfers sulfur from IscS to the molybdenum cofactor prior to its insertion into FDH. The chain is Sulfur carrier protein FdhD from Nocardia farcinica (strain IFM 10152).